The sequence spans 158 residues: Secreted RxLR effector protein 131 (158 aa).

The N-terminal stretch at 1–20 is a signal peptide; it reads MRQIPLVVVLLLAYAARLQG. A RxLR-dEER motif is present at residues 39–57; sequence RDLDGSTTSMSVNVDDEER. The host BKI1-binding stretch occupies residues 120–158; it reads KGNVKYLAIIYVICILSVLGILGTVFAINRNISNQYIHE. Residues 127–147 form a helical membrane-spanning segment; the sequence is AIIYVICILSVLGILGTVFAI. N-linked (GlcNAc...) asparagine glycosylation is present at asparagine 150.

This sequence belongs to the RxLR effector family. As to quaternary structure, interacts with host BKI1.

The protein resides in the secreted. It localises to the host cell membrane. Its function is as follows. Secreted effector that suppresses pathogen-associated molecular pattern (PAMP)-triggered immunity (PTI) in host plants. Suppresses both defense-related brassinosteroid (BR) and ERECTA (ER) signaling pathways in planta by interacting with host BRI1 kinase inhibitor 1 (BKI1) at the host plasma membrane, leading to a host dwarf phenotype. The polypeptide is Secreted RxLR effector protein 131 (Plasmopara viticola (Downy mildew of grapevine)).